Here is a 959-residue protein sequence, read N- to C-terminus: Mitogen-activated protein kinase kinase kinase 13 (959 aa).

A disordered region spans residues 1-47 (MANPQEHLSCSSLPHLPLTENKTSGGRNELAAMGNHPSPKLPEDPQE). Residues 7 to 18 (HLSCSSLPHLPL) are compositionally biased toward low complexity. One can recognise a Protein kinase domain in the interval 167 to 408 (ISELQWLGSG…FRQTLMHLDI (242 aa)). Residues 173 to 181 (LGSGAQGAV) and Lys194 contribute to the ATP site. Catalysis depends on Asp278, which acts as the Proton acceptor. 2 leucine-zipper regions span residues 432-453 (VKKH…DEEL) and 485-506 (LSAI…EQAV). Disordered stretches follow at residues 533 to 599 (KRKG…GSHS), 739 to 828 (GSLD…RQRP), 842 to 902 (SSEN…LSDK), and 927 to 959 (NPVQ…SATW). The segment covering 566–577 (SPLSGSPKMSTA) has biased composition (polar residues). Basic residues predominate over residues 581–593 (SRYRSKPRHRRGN). 2 stretches are compositionally biased toward polar residues: residues 754-774 (DLSS…SERT) and 780-790 (SGCQSGISHQF). A compositionally biased stretch (acidic residues) spans 808-820 (DSSEEEGEVDSEV). Positions 866–876 (SANRRQDRLAE) are enriched in basic and acidic residues. Acidic residues predominate over residues 934–943 (SDCDSSEGEC). Residues 947–959 (TVRTSKNYSSATW) are compositionally biased toward polar residues.

This sequence belongs to the protein kinase superfamily. STE Ser/Thr protein kinase family. MAP kinase kinase kinase subfamily. Homodimer; forms dimers through the leucine-zipper motif. Interacts with the C-terminus of MAPK8IP1 through the kinase catalytic domain. Binds PRDX3. Associates with the IKK complex through the kinase domain. Mg(2+) is required as a cofactor. Autophosphorylated on serine and threonine residues.

It is found in the cytoplasm. Its subcellular location is the membrane. The catalysed reaction is L-seryl-[protein] + ATP = O-phospho-L-seryl-[protein] + ADP + H(+). It carries out the reaction L-threonyl-[protein] + ATP = O-phospho-L-threonyl-[protein] + ADP + H(+). Its activity is regulated as follows. Activated by autophosphorylation and homodimerization. Its function is as follows. Activates the JUN N-terminal pathway through activation of the MAP kinase kinase MAP2K7. Acts synergistically with PRDX3 to regulate the activation of NF-kappa-B in the cytosol. This activation is kinase-dependent and involves activating the IKK complex, the IKBKB-containing complex that phosphorylates inhibitors of NF-kappa-B. This Mus musculus (Mouse) protein is Mitogen-activated protein kinase kinase kinase 13 (Map3k13).